The chain runs to 239 residues: Uridylate kinase (239 aa).

Position 13-16 (13-16 (KLSG)) interacts with ATP. Position 55 (Gly55) interacts with UMP. Residues Gly56 and Arg60 each contribute to the ATP site. UMP is bound by residues Asp75 and 136 to 143 (TGNPFFTT). Residues Thr163, Asn164, Tyr169, and Asp172 each contribute to the ATP site.

It belongs to the UMP kinase family. In terms of assembly, homohexamer.

The protein localises to the cytoplasm. It carries out the reaction UMP + ATP = UDP + ADP. It functions in the pathway pyrimidine metabolism; CTP biosynthesis via de novo pathway; UDP from UMP (UMPK route): step 1/1. Its activity is regulated as follows. Inhibited by UTP. Catalyzes the reversible phosphorylation of UMP to UDP. In Neisseria meningitidis serogroup C / serotype 2a (strain ATCC 700532 / DSM 15464 / FAM18), this protein is Uridylate kinase.